The following is a 303-amino-acid chain: ATP phosphoribosyltransferase (303 aa).

This sequence belongs to the ATP phosphoribosyltransferase family. Long subfamily. It depends on Mg(2+) as a cofactor.

The protein localises to the cytoplasm. The enzyme catalyses 1-(5-phospho-beta-D-ribosyl)-ATP + diphosphate = 5-phospho-alpha-D-ribose 1-diphosphate + ATP. It functions in the pathway amino-acid biosynthesis; L-histidine biosynthesis; L-histidine from 5-phospho-alpha-D-ribose 1-diphosphate: step 1/9. With respect to regulation, feedback inhibited by histidine. Its function is as follows. Catalyzes the condensation of ATP and 5-phosphoribose 1-diphosphate to form N'-(5'-phosphoribosyl)-ATP (PR-ATP). Has a crucial role in the pathway because the rate of histidine biosynthesis seems to be controlled primarily by regulation of HisG enzymatic activity. This Haemophilus influenzae (strain PittGG) protein is ATP phosphoribosyltransferase.